The sequence spans 107 residues: Small ribosomal subunit protein bS18c (107 aa).

Residues 85–95 (KKAQRFKRRQS) show a composition bias toward basic residues. The segment at 85–107 (KKAQRFKRRQSTARTVGLRTRNK) is disordered.

The protein belongs to the bacterial ribosomal protein bS18 family. Part of the 30S ribosomal subunit.

The protein localises to the plastid. The protein resides in the chloroplast. The polypeptide is Small ribosomal subunit protein bS18c (Oenothera argillicola (Appalachian evening primrose)).